Here is a 184-residue protein sequence, read N- to C-terminus: Photosystem I assembly protein Ycf4 (184 aa).

2 helical membrane passes run 19–39 (ISNF…LLVG) and 57–77 (IVFF…LFIS).

This sequence belongs to the Ycf4 family.

The protein resides in the plastid. The protein localises to the chloroplast thylakoid membrane. Its function is as follows. Seems to be required for the assembly of the photosystem I complex. The chain is Photosystem I assembly protein Ycf4 from Nicotiana tomentosiformis (Tobacco).